The primary structure comprises 67 residues: Probable Sec-independent protein translocase protein TatE (67 aa).

A helical transmembrane segment spans residues 4 to 21 (ISITKLLVVAALVVLLFG).

It belongs to the TatA/E family. TatE subfamily.

It localises to the cell inner membrane. Its function is as follows. Part of the twin-arginine translocation (Tat) system that transports large folded proteins containing a characteristic twin-arginine motif in their signal peptide across membranes. TatE shares overlapping functions with TatA. The polypeptide is Probable Sec-independent protein translocase protein TatE (Shigella flexneri).